We begin with the raw amino-acid sequence, 411 residues long: Floricaula/leafy-like protein (411 aa).

The disordered stretch occupies residues 220 to 259 (PDTNYGSEQTKACKKQKRRRSKDSGEDGEERQREHPFIVT). Positions 231–240 (ACKKQKRRRS) are enriched in basic residues. The segment covering 241–255 (KDSGEDGEERQREHP) has biased composition (basic and acidic residues). DNA-binding regions lie at residues 252–256 (REHPF), 321–328 (NKPKMRHY), and 392–395 (YVPT).

It belongs to the FLO/LFY family. As to expression, expressed in vegetative buds and male cones but not in female cones, vascular tissue, roots or secondary needles.

The protein localises to the nucleus. Functionally, probable transcription factor. This chain is Floricaula/leafy-like protein (FLL), found in Pinus radiata (Monterey pine).